Here is a 190-residue protein sequence, read N- to C-terminus: MTKLPYALLEKGSLLIASPDVNGGVFSRSVILVCEHSPNGSFGLILNKTLEMDSPEEVFPLDHFDESRVRFCMGGPLQANQIMLLHSSSSEDANSSIEICPSVFLGGDFSFIQEGEIKSNDEKMLFCFGYSGWQAGQLEKEFLEGLWFLAPASQEIVFTARPDKLWSDVLQNLGGRFASMSTVPENLLLN.

It belongs to the UPF0301 (AlgH) family.

In Chlamydia muridarum (strain MoPn / Nigg), this protein is UPF0301 protein TC_0483.